A 543-amino-acid polypeptide reads, in one-letter code: Neurofilament light polypeptide (543 aa).

Ser-2 is subject to N-acetylserine. Residues 2-92 are head; sequence SSFSYEPYYS…LKSIRTQEKA (91 aa). Thr-21 is a glycosylation site (O-linked (GlcNAc) threonine). At Arg-23 the chain carries Asymmetric dimethylarginine; alternate. Arg-23 carries the post-translational modification Omega-N-methylarginine; alternate. O-linked (GlcNAc) serine glycosylation is present at Ser-27. At Arg-30 the chain carries Omega-N-methylarginine. At Tyr-43 the chain carries Phosphotyrosine. 3 positions are modified to phosphoserine: Ser-56, Ser-67, and Ser-103. One can recognise an IF rod domain in the interval 90–400; that stretch reads EKAQLQDLND…KLLEGEETRL (311 aa). A coil 1A region spans residues 93–124; sequence QLQDLNDRFASFIERVHELEQQNKVLEAELLV. Positions 125–137 are linker 1; it reads LRQKHSEPSRFRA. A coil 1B region spans residues 138 to 234; the sequence is LYEQEIRDLR…KVHEEEIAEL (97 aa). The tract at residues 235 to 252 is linker 12; that stretch reads QAQIQYAQISVEMDVTKP. The interval 253–271 is coil 2A; sequence DLSAALKDIRAQYEKLAAK. The linker 2 stretch occupies residues 272 to 280; that stretch reads NMQNAEEWF. Positions 281–396 are coil 2B; sequence KSRFTVLTES…AAYRKLLEGE (116 aa). Residues 381-391 form an epitope; recognized by IF-specific monoclonal antibody region; sequence ALDIEIAAYRK. The interval 397 to 443 is tail, subdomain A; sequence ETRLSFTSVGSITSGYSQSSQVFGRSAYGGLQTSSYLMSTRSFPSYY. Positions 397–543 are tail; it reads ETRLSFTSVG…GEEQAAKKKD (147 aa). A tail, subdomain B (acidic) region spans residues 444–543; the sequence is TSHVQEEQIE…GEEQAAKKKD (100 aa). The segment at 462–543 is disordered; that stretch reads KAEEAKDEPP…GEEQAAKKKD (82 aa). Acidic residues predominate over residues 471–525; it reads PSEGEAEEEEKDKEEAEEEEAAEEEEAAKEESEEAKEEEEGGEGEEGEETKEAEE. A phosphoserine mark is found at Ser-472 and Ser-502. Thr-520 carries the phosphothreonine modification. A compositionally biased stretch (basic and acidic residues) spans 526 to 543; that stretch reads EEKKVEGAGEEQAAKKKD.

Belongs to the intermediate filament family. In terms of assembly, forms homodimers (in vitro). Forms heterodimers with NEFH or NEFM; which can further hetero-oligomerize (in vitro). Forms heterodimers with INA (in vitro). Interacts with ARHGEF28. Interacts with TRIM2. Post-translationally, O-glycosylated. Phosphorylated in the head and rod regions by the PKC kinase PKN1, leading to the inhibition of polymerization. In terms of processing, ubiquitinated in the presence of TRIM2 and UBE2D1.

The protein localises to the cell projection. Its subcellular location is the axon. It is found in the cytoplasm. It localises to the cytoskeleton. In terms of biological role, neurofilaments usually contain three intermediate filament proteins: NEFL, NEFM, and NEFH which are involved in the maintenance of neuronal caliber. May additionally cooperate with the neuronal intermediate filament proteins PRPH and INA to form neuronal filamentous networks. In Homo sapiens (Human), this protein is Neurofilament light polypeptide (NEFL).